Here is a 234-residue protein sequence, read N- to C-terminus: tRNA1(Val) (adenine(37)-N6)-methyltransferase (234 aa).

It belongs to the methyltransferase superfamily. tRNA (adenine-N(6)-)-methyltransferase family.

Its subcellular location is the cytoplasm. The catalysed reaction is adenosine(37) in tRNA1(Val) + S-adenosyl-L-methionine = N(6)-methyladenosine(37) in tRNA1(Val) + S-adenosyl-L-homocysteine + H(+). Its function is as follows. Specifically methylates the adenine in position 37 of tRNA(1)(Val) (anticodon cmo5UAC). The chain is tRNA1(Val) (adenine(37)-N6)-methyltransferase from Aliivibrio salmonicida (strain LFI1238) (Vibrio salmonicida (strain LFI1238)).